Here is a 225-residue protein sequence, read N- to C-terminus: Probable 3-keto-L-gulonate-6-phosphate decarboxylase (225 aa).

Aspartate 11 serves as a coordination point for substrate. Glutamate 33 and aspartate 62 together coordinate Mg(2+). Arginine 202 lines the substrate pocket.

Belongs to the HPS/KGPDC family. KGPDC subfamily. As to quaternary structure, homodimer. Mg(2+) is required as a cofactor.

The catalysed reaction is 3-dehydro-L-gulonate 6-phosphate + H(+) = L-xylulose 5-phosphate + CO2. Catalyzes the decarboxylation of 3-keto-L-gulonate-6-P into L-xylulose-5-P. In Haemophilus influenzae (strain ATCC 51907 / DSM 11121 / KW20 / Rd), this protein is Probable 3-keto-L-gulonate-6-phosphate decarboxylase (sgbH).